Here is a 214-residue protein sequence, read N- to C-terminus: Ribosomal RNA small subunit methyltransferase G (214 aa).

S-adenosyl-L-methionine contacts are provided by residues Gly78, Leu83, 129–130 (AE), and Arg144.

This sequence belongs to the methyltransferase superfamily. RNA methyltransferase RsmG family.

Its subcellular location is the cytoplasm. The enzyme catalyses guanosine(527) in 16S rRNA + S-adenosyl-L-methionine = N(7)-methylguanosine(527) in 16S rRNA + S-adenosyl-L-homocysteine. Specifically methylates the N7 position of guanine in position 527 of 16S rRNA. This is Ribosomal RNA small subunit methyltransferase G from Marinobacter nauticus (strain ATCC 700491 / DSM 11845 / VT8) (Marinobacter aquaeolei).